The chain runs to 157 residues: N5-carboxyaminoimidazole ribonucleotide mutase (157 aa).

Residues Ser8, Asp11, and Arg38 each contribute to the substrate site.

This sequence belongs to the AIR carboxylase family. Class I subfamily.

It catalyses the reaction 5-carboxyamino-1-(5-phospho-D-ribosyl)imidazole + H(+) = 5-amino-1-(5-phospho-D-ribosyl)imidazole-4-carboxylate. The protein operates within purine metabolism; IMP biosynthesis via de novo pathway; 5-amino-1-(5-phospho-D-ribosyl)imidazole-4-carboxylate from 5-amino-1-(5-phospho-D-ribosyl)imidazole (N5-CAIR route): step 2/2. Functionally, catalyzes the conversion of N5-carboxyaminoimidazole ribonucleotide (N5-CAIR) to 4-carboxy-5-aminoimidazole ribonucleotide (CAIR). The polypeptide is N5-carboxyaminoimidazole ribonucleotide mutase (Methanocaldococcus jannaschii (strain ATCC 43067 / DSM 2661 / JAL-1 / JCM 10045 / NBRC 100440) (Methanococcus jannaschii)).